The following is a 199-amino-acid chain: Protein ZNRD2 (199 aa).

Position 2 is an N-acetylalanine (Ala-2). Positions 53, 56, 70, and 73 each coordinate Zn(2+). Residues Leu-93–Asp-148 are disordered. Ser-94 is subject to Phosphoserine. Residues Gly-127 to Ala-137 are compositionally biased toward low complexity. The Nuclear export signal motif lies at Ser-173–Leu-194.

Homodimer. Requires Zn(2+) as cofactor. Expressed in the early postnatal brain.

It is found in the cytoplasm. Functionally, might play a role in mitosis. Could be a centromere-associated protein. Antigenic molecule. May induce anti-centromere antibodies. The sequence is that of Protein ZNRD2 (Znrd2) from Mus musculus (Mouse).